The following is a 556-amino-acid chain: Formate--tetrahydrofolate ligase (556 aa).

Residue 65 to 72 coordinates ATP; the sequence is TPAGEGKT.

Belongs to the formate--tetrahydrofolate ligase family.

The catalysed reaction is (6S)-5,6,7,8-tetrahydrofolate + formate + ATP = (6R)-10-formyltetrahydrofolate + ADP + phosphate. The protein operates within one-carbon metabolism; tetrahydrofolate interconversion. The polypeptide is Formate--tetrahydrofolate ligase (Alkaliphilus oremlandii (strain OhILAs) (Clostridium oremlandii (strain OhILAs))).